Here is a 180-residue protein sequence, read N- to C-terminus: ATP synthase subunit delta, chloroplastic (180 aa).

This sequence belongs to the ATPase delta chain family. As to quaternary structure, F-type ATPases have 2 components, F(1) - the catalytic core - and F(0) - the membrane proton channel. F(1) has five subunits: alpha(3), beta(3), gamma(1), delta(1), epsilon(1). CF(0) has four main subunits: a(1), b(1), b'(1) and c(10-14). The alpha and beta chains form an alternating ring which encloses part of the gamma chain. F(1) is attached to F(0) by a central stalk formed by the gamma and epsilon chains, while a peripheral stalk is formed by the delta, b and b' chains.

It localises to the plastid. Its subcellular location is the chloroplast thylakoid membrane. In terms of biological role, f(1)F(0) ATP synthase produces ATP from ADP in the presence of a proton or sodium gradient. F-type ATPases consist of two structural domains, F(1) containing the extramembraneous catalytic core and F(0) containing the membrane proton channel, linked together by a central stalk and a peripheral stalk. During catalysis, ATP synthesis in the catalytic domain of F(1) is coupled via a rotary mechanism of the central stalk subunits to proton translocation. Functionally, this protein is part of the stalk that links CF(0) to CF(1). It either transmits conformational changes from CF(0) to CF(1) or is implicated in proton conduction. The sequence is that of ATP synthase subunit delta, chloroplastic from Emiliania huxleyi (Coccolithophore).